Here is a 798-residue protein sequence, read N- to C-terminus: Phenylalanine--tRNA ligase beta subunit (798 aa).

The 110-residue stretch at 39-148 (GKDLDNVVIG…EDAPIGTEYR (110 aa)) folds into the tRNA-binding domain. Residues 401 to 477 (PQRAEISLNL…RMYGFDNIEA (77 aa)) form the B5 domain. Residues Asp455, Asp461, Glu464, and Glu465 each coordinate Mg(2+). In terms of domain architecture, FDX-ACB spans 705–797 (SKYPEVLRDL…IKDKYNGEIR (93 aa)).

It belongs to the phenylalanyl-tRNA synthetase beta subunit family. Type 1 subfamily. As to quaternary structure, tetramer of two alpha and two beta subunits. Requires Mg(2+) as cofactor.

Its subcellular location is the cytoplasm. The catalysed reaction is tRNA(Phe) + L-phenylalanine + ATP = L-phenylalanyl-tRNA(Phe) + AMP + diphosphate + H(+). The sequence is that of Phenylalanine--tRNA ligase beta subunit from Fusobacterium nucleatum subsp. nucleatum (strain ATCC 25586 / DSM 15643 / BCRC 10681 / CIP 101130 / JCM 8532 / KCTC 2640 / LMG 13131 / VPI 4355).